A 99-amino-acid chain; its full sequence is Acylphosphatase (99 aa).

Positions 5–97 (VRQIVIRGRV…RPGERFSQLP (93 aa)) constitute an Acylphosphatase-like domain. Active-site residues include arginine 20 and asparagine 38.

This sequence belongs to the acylphosphatase family.

The catalysed reaction is an acyl phosphate + H2O = a carboxylate + phosphate + H(+). This is Acylphosphatase (acyP) from Nitrobacter hamburgensis (strain DSM 10229 / NCIMB 13809 / X14).